Reading from the N-terminus, the 153-residue chain is 3-hydroxyacyl-[acyl-carrier-protein] dehydratase FabZ (153 aa).

Residue His-54 is part of the active site.

It belongs to the thioester dehydratase family. FabZ subfamily.

It localises to the cytoplasm. It catalyses the reaction a (3R)-hydroxyacyl-[ACP] = a (2E)-enoyl-[ACP] + H2O. In terms of biological role, involved in unsaturated fatty acids biosynthesis. Catalyzes the dehydration of short chain beta-hydroxyacyl-ACPs and long chain saturated and unsaturated beta-hydroxyacyl-ACPs. This is 3-hydroxyacyl-[acyl-carrier-protein] dehydratase FabZ from Chlamydia pneumoniae (Chlamydophila pneumoniae).